We begin with the raw amino-acid sequence, 883 residues long: HTH-type transcriptional regulator AlkS (883 aa).

The HTH luxR-type domain occupies 816 to 881; sequence ENKAGDFLTL…QAIIEAERQG (66 aa). Residues 840–859 constitute a DNA-binding region (H-T-H motif); sequence NKQIATKMYVTEDAIKWHMR.

Its pathway is hydrocarbon metabolism; alkane degradation. Its function is as follows. May act as a transcriptional regulator of AlkB. In Pseudomonas putida (Arthrobacter siderocapsulatus), this protein is HTH-type transcriptional regulator AlkS (alkS).